The following is a 168-amino-acid chain: Lipoprotein signal peptidase (168 aa).

3 consecutive transmembrane segments (helical) span residues 15–35, 69–89, and 95–115; these read AIAA…LGLL, WGRW…AVWV, and PLLA…NLID. Residues aspartate 124 and aspartate 141 contribute to the active site. Residues 133 to 153 traverse the membrane as a helical segment; that stretch reads FPWVFNIADSGISVGVALLLL.

Belongs to the peptidase A8 family.

Its subcellular location is the cell inner membrane. It catalyses the reaction Release of signal peptides from bacterial membrane prolipoproteins. Hydrolyzes -Xaa-Yaa-Zaa-|-(S,diacylglyceryl)Cys-, in which Xaa is hydrophobic (preferably Leu), and Yaa (Ala or Ser) and Zaa (Gly or Ala) have small, neutral side chains.. It participates in protein modification; lipoprotein biosynthesis (signal peptide cleavage). Its function is as follows. This protein specifically catalyzes the removal of signal peptides from prolipoproteins. In Caulobacter vibrioides (strain ATCC 19089 / CIP 103742 / CB 15) (Caulobacter crescentus), this protein is Lipoprotein signal peptidase.